The primary structure comprises 128 residues: Aspartate 1-decarboxylase (128 aa).

Catalysis depends on serine 25, which acts as the Schiff-base intermediate with substrate; via pyruvic acid. Position 25 is a pyruvic acid (Ser) (serine 25). Residue threonine 57 coordinates substrate. Tyrosine 58 serves as the catalytic Proton donor. 73-75 (GAA) contacts substrate.

Belongs to the PanD family. As to quaternary structure, heterooctamer of four alpha and four beta subunits. Pyruvate serves as cofactor. In terms of processing, is synthesized initially as an inactive proenzyme, which is activated by self-cleavage at a specific serine bond to produce a beta-subunit with a hydroxyl group at its C-terminus and an alpha-subunit with a pyruvoyl group at its N-terminus.

It is found in the cytoplasm. The catalysed reaction is L-aspartate + H(+) = beta-alanine + CO2. It functions in the pathway cofactor biosynthesis; (R)-pantothenate biosynthesis; beta-alanine from L-aspartate: step 1/1. Catalyzes the pyruvoyl-dependent decarboxylation of aspartate to produce beta-alanine. The protein is Aspartate 1-decarboxylase of Chlorobium limicola (strain DSM 245 / NBRC 103803 / 6330).